The sequence spans 177 residues: Large ribosomal subunit protein uL6 (177 aa).

Residues 154 to 171 (PEPYKGKGVRYADEQVRR) are compositionally biased toward basic and acidic residues. The disordered stretch occupies residues 154-177 (PEPYKGKGVRYADEQVRRKEAKKK).

This sequence belongs to the universal ribosomal protein uL6 family. Part of the 50S ribosomal subunit.

In terms of biological role, this protein binds to the 23S rRNA, and is important in its secondary structure. It is located near the subunit interface in the base of the L7/L12 stalk, and near the tRNA binding site of the peptidyltransferase center. The sequence is that of Large ribosomal subunit protein uL6 from Marinobacter nauticus (strain ATCC 700491 / DSM 11845 / VT8) (Marinobacter aquaeolei).